The primary structure comprises 290 residues: Phosphatidylglycerol--prolipoprotein diacylglyceryl transferase (290 aa).

7 consecutive transmembrane segments (helical) span residues 21–41 (VSLHWYGLMYLVGFVFAMWLA), 60–80 (LLYAGFLGVFVGGRVGYVLFY), 96–116 (WDGGMSFHGGLIGVICVMLWF), 124–144 (FFQVADFIAPLIPFGLGAGRL), 199–219 (SQLYEMILEGVVLFIILNLFI), 226–246 (GSVSGLFLIGYGAFRIIVECF), and 259–279 (VISMGQILSVPMILAGIIMMI). Residue Arg143 participates in a 1,2-diacyl-sn-glycero-3-phospho-(1'-sn-glycerol) binding.

It belongs to the Lgt family.

It localises to the cell inner membrane. It catalyses the reaction L-cysteinyl-[prolipoprotein] + a 1,2-diacyl-sn-glycero-3-phospho-(1'-sn-glycerol) = an S-1,2-diacyl-sn-glyceryl-L-cysteinyl-[prolipoprotein] + sn-glycerol 1-phosphate + H(+). Its pathway is protein modification; lipoprotein biosynthesis (diacylglyceryl transfer). Functionally, catalyzes the transfer of the diacylglyceryl group from phosphatidylglycerol to the sulfhydryl group of the N-terminal cysteine of a prolipoprotein, the first step in the formation of mature lipoproteins. This is Phosphatidylglycerol--prolipoprotein diacylglyceryl transferase from Yersinia enterocolitica serotype O:8 / biotype 1B (strain NCTC 13174 / 8081).